Reading from the N-terminus, the 129-residue chain is Glycine cleavage system H protein (129 aa).

Positions 24–106 constitute a Lipoyl-binding domain; the sequence is LLKIGVSEFA…IGDGWLVILK (83 aa). Lys-65 carries the N6-lipoyllysine modification.

The protein belongs to the GcvH family. In terms of assembly, the glycine cleavage system is composed of four proteins: P, T, L and H. (R)-lipoate serves as cofactor.

Its function is as follows. The glycine cleavage system catalyzes the degradation of glycine. The H protein shuttles the methylamine group of glycine from the P protein to the T protein. This Prochlorococcus marinus (strain MIT 9301) protein is Glycine cleavage system H protein.